Reading from the N-terminus, the 503-residue chain is Maturase K (503 aa).

This sequence belongs to the intron maturase 2 family. MatK subfamily.

It localises to the plastid. It is found in the chloroplast. Functionally, usually encoded in the trnK tRNA gene intron. Probably assists in splicing its own and other chloroplast group II introns. The chain is Maturase K from Backhousia myrtifolia (Grey myrtle).